The chain runs to 863 residues: Leucine--tRNA ligase (863 aa).

The 'HIGH' region signature appears at 42–52 (PYPSGKLHMGH). A 'KMSKS' region motif is present at residues 623–627 (KMSKS). Lys626 contacts ATP.

Belongs to the class-I aminoacyl-tRNA synthetase family.

It localises to the cytoplasm. It catalyses the reaction tRNA(Leu) + L-leucine + ATP = L-leucyl-tRNA(Leu) + AMP + diphosphate. This is Leucine--tRNA ligase from Paraburkholderia xenovorans (strain LB400).